We begin with the raw amino-acid sequence, 409 residues long: Ubiquitin-associated domain-containing protein 1 (409 aa).

At Met1 the chain carries N-acetylmethionine. Residues 14–98 form the Ubiquitin-like domain; sequence LRLHICAADG…LLLIKKRAPS (85 aa). In terms of domain architecture, UBA 1 spans 187 to 231; sequence DEDERVDETALRQLTEMGFPESRASKALRLNHMSVPQAMEWLIEH. A disordered region spans residues 235 to 273; the sequence is PAIDTPLPGHAAQAEASAAAATSSSSSEAAVGTSVEDEE. Positions 245 to 264 are enriched in low complexity; it reads AAQAEASAAAATSSSSSEAA. One can recognise a UBA 2 domain in the interval 292-332; that stretch reads RADARAVISLMEMGFDEKEVIDALRVNNNQQNAACEWLLGD. Residues 357–396 enclose the STI1 domain; sequence NPVVQLGLTNPKTLLAFEDMLENPLNSTQWMNDPETGPVM.

As to quaternary structure, component of the KPC complex composed of RNF123/KPC1 and UBAC1/KPC2. Interacts (via ubiquitin-like domain) with RNF123. Interacts (via ubiquitin-like and UBA domains) with the proteasome via its N-terminal domain.

The protein localises to the cytoplasm. The protein operates within protein modification; protein ubiquitination. Its function is as follows. Non-catalytic component of the KPC complex, a E3 ubiquitin-protein ligase complex that mediates polyubiquitination of target proteins, such as CDKN1B and NFKB1. The KPC complex catalyzes polyubiquitination and proteasome-mediated degradation of CDKN1B during G1 phase of the cell cycle. The KPC complex also acts as a key regulator of the NF-kappa-B signaling by promoting maturation of the NFKB1 component of NF-kappa-B by catalyzing ubiquitination of the NFKB1 p105 precursor. Within the KPC complex, UBAC1 acts as an adapter that promotes the transfer of target proteins that have been polyubiquitinated by RNF123/KPC1 to the 26S proteasome. This is Ubiquitin-associated domain-containing protein 1 (Ubac1) from Rattus norvegicus (Rat).